Consider the following 570-residue polypeptide: Interleukin-1 receptor accessory protein (570 aa).

An N-terminal signal peptide occupies residues 1–20 (MTLLWCVVSLYFYGILQSDA). Ig-like C2-type domains are found at residues 21–128 (SERC…VAFP), 141–230 (PMKL…RTLT), and 242–348 (PPVI…AKVK). Residues 21–367 (SERCDDWGLD…VELACGFGAT (347 aa)) lie on the Extracellular side of the membrane. Disulfide bonds link Cys24–Cys122, Cys47–Cys114, Cys137–Cys181, Cys160–Cys212, and Cys266–Cys332. N-linked (GlcNAc...) asparagine glycosylation occurs at Asn57. The segment at 69–85 (IWYWTRQDRDLEEPINF) is essential for interaction with PTPRD. Residues Asn107, Asn111, and Asn118 are each glycosylated (N-linked (GlcNAc...) asparagine). 3 N-linked (GlcNAc...) asparagine glycosylation sites follow: Asn196, Asn209, and Asn299. Residues 368–388 (VLLVVILIVVYHVYWLEMVLF) traverse the membrane as a helical segment. Over 389–570 (YRAHFGTDET…GLSYSSLKNV (182 aa)) the chain is Cytoplasmic. The region spanning 403–546 (KEYDIYVSYA…RFWKQLQVAM (144 aa)) is the TIR domain. The active site involves Glu482. The segment at 549–570 (KKSPRRSSSDEQGLSYSSLKNV) is disordered. The residue at position 557 (Ser557) is a Phosphoserine. A compositionally biased stretch (polar residues) spans 558-570 (DEQGLSYSSLKNV).

Belongs to the interleukin-1 receptor family. As to quaternary structure, the interleukin-36 receptor complex is a heterodimer of IL1RL2 and IL1RAP; the association is inhibited by IL36RN. The interleukin-1 receptor complex is a heterodimer of IL1R1 and IL1RAP. Associates with IL1R2 to form a non-signaling interleukin-1 receptor complex. Isoform 4 interacts with IL1R1 in an interleukin-1-dependent manner. Interacts with IL-33-bound IL1RL1 to form the minimal interleukin-33 signaling complex with a 1:1:1 stoichiometry. Interacts with KIT (independently of stimulation with KITLG/SCF). A mast cell-specific KITLG/SCF-induced interleukin-33 signaling complex contains IL1RL1, IL1RAP, KIT and MYD88. Interacts (via the first immunoglobilin domain) with PTPRD (via the third immunoglobilin domain); induces pre- and postsynaptic differentiation of neurons. As to expression, detected in liver, skin, placenta, thymus and lung. Isoform 4 is predominantly expressed in brain. Overexpressed on candidate chronic myeloid leukemia (CML) stem cells, hematopoietic stem cells and mononuclear cells of patients with acute myeloid leukemia (AML). Overexpressed in patients with chronic obstructive pulmonary disease (COPD). Expressed in T-helper 1 (Th1) and T-helper 2 (Th2) cell subsets.

The protein localises to the cell membrane. It localises to the secreted. The enzyme catalyses NAD(+) + H2O = ADP-D-ribose + nicotinamide + H(+). Its function is as follows. Coreceptor for IL1RL2 in the IL-36 signaling system. Coreceptor with IL1R1 in the IL-1 signaling system. Associates with IL1R1 bound to IL1B to form the high affinity interleukin-1 receptor complex which mediates interleukin-1-dependent activation of NF-kappa-B and other pathways. Signaling involves the recruitment of adapter molecules such as TOLLIP, MYD88, and IRAK1 or IRAK2 via the respective TIR domains of the receptor/coreceptor subunits. Recruits TOLLIP to the signaling complex. Does not bind to interleukin-1 alone; binding of IL1RN to IL1R1, prevents its association with IL1R1 to form a signaling complex. The cellular response is modulated through a non-signaling association with the membrane IL1R2 decoy receptor. Coreceptor for IL1RL1 in the IL-33 signaling system. Can bidirectionally induce pre- and postsynaptic differentiation of neurons by trans-synaptically binding to PTPRD. May play a role in IL1B-mediated costimulation of IFNG production from T-helper 1 (Th1) cells. In terms of biological role, associates with secreted ligand-bound IL1R2 and increases the affinity of secreted IL1R2 for IL1B; this complex formation may be the dominant mechanism for neutralization of IL1B by secreted/soluble receptors. Enhances the ability of secreted IL1R1 to inhibit IL-33 signaling. Functionally, unable to mediate canonical IL-1 signaling. Required for Src phosphorylation by IL1B. May be involved in IL1B-potentiated NMDA-induced calcium influx in neurons. This Homo sapiens (Human) protein is Interleukin-1 receptor accessory protein (IL1RAP).